We begin with the raw amino-acid sequence, 678 residues long: Glutamic acid-rich protein (678 aa).

The signal sequence occupies residues 1–25; sequence MNVLFLSYNICILFFVVCTLNFSTK. The span at 56–79 shows a compositional bias: basic and acidic residues; sequence EKNKDDNSKSETLLKEEKDEKDDV. Disordered stretches follow at residues 56 to 194, 225 to 445, and 520 to 678; these read EKNK…NLDE, ISSV…VVKN, and VVPR…NAKI. Over residues 80–107 the composition is skewed to polar residues; that stretch reads PTTSNDNLKNAHNNNEISSSTDPTNIIN. The span at 109–120 shows a compositional bias: basic and acidic residues; sequence NDKDNENSVDKK. 15 consecutive repeat copies span residues 120-122, 123-125, 126-128, 129-131, 132-134, 135-137, 138-140, 141-143, 144-146, 147-149, 150-152, 153-155, 156-158, 159-161, and 162-164. The 15 X 3 AA tandem repeats of K-K-[DEHK] stretch occupies residues 120-164; sequence KKDKKEKKHKKDKKEKKEKKDKKEKKDKKEKKHKKEKKHKKDKKK. The segment covering 121–165 has biased composition (basic residues); the sequence is KDKKEKKHKKDKKEKKEKKDKKEKKDKKEKKHKKEKKHKKDKKKK. Basic and acidic residues-rich tracts occupy residues 231–329 and 371–411; these read TSND…EEKE and PEEH…EHKS. 14 consecutive repeat copies span residues 372-376, 377-381, 382-386, 387-391, 392-396, 397-401, 402-406, 407-411, 412-416, 417-421, 422-426, 427-431, 432-436, and 437-441. The segment at 372–416 is 9 X 5 AA tandem repeats of [EGK]-E-H-K-[EKS]; it reads EEHKEGEHKEEEHKEGEHKEGEHKEEEHKEEEHKKEEHKSKEHKS. Residues 412-443 are compositionally biased toward basic residues; sequence KEHKSKGKKDKGKKDKGKHKKAKKEKVKKHVV. Residues 417-441 form a 5 X 5 AA tandem repeats of K-[GAV]-K-[KH]-[DKEH] region; it reads KGKKDKGKKDKGKHKKAKKEKVKKH. Positions 532 to 565 are enriched in basic and acidic residues; it reads AKIEEAELQKQKHVDKEEDKKEESKEVQEESKEV. Positions 566-663 are enriched in acidic residues; the sequence is QEDEEEVEED…EEEEEEEEEE (98 aa). Over residues 667–678 the composition is skewed to basic residues; the sequence is KIKRNLRKNAKI.

This Plasmodium falciparum (isolate FC27 / Papua New Guinea) protein is Glutamic acid-rich protein (GARP).